The primary structure comprises 2776 residues: Microtubule-associated protein 1A (2776 aa).

A phosphoserine mark is found at Ser-114, Ser-117, Ser-118, Ser-121, and Ser-155. Tyr-177 is modified (phosphotyrosine). The tract at residues 310 to 331 (PSKIKHRADSKESLKAAPKTAM) is disordered. Phosphoserine occurs at positions 319 and 322. Repeat 1 spans residues 336-338 (KRE). The interval 336–541 (KREEVLEEGA…TQDFEELKRE (206 aa)) is 11 X 3 AA approximate repeats of K-K-[DE]. A compositionally biased stretch (basic and acidic residues) spans 345 to 390 (AKEARSELAKELAKSEKKAKEPSEKPPEKPSKPERVRTESSEALKA). 8 disordered regions span residues 345–678 (AKEA…KAES), 738–809 (TIPG…TELT), 846–1076 (EDQS…AGGQ), 1094–1210 (ETGE…ESLG), 1223–1651 (EKGP…SPEQ), 1685–1729 (DGQG…FKDF), 1744–1848 (LAES…APFS), and 1866–2648 (AELE…NGLK). A Phosphoserine modification is found at Ser-384. Residues 391–406 (EKRKLIKDKVGKKHLK) are compositionally biased toward basic residues. 2 stretches are compositionally biased toward basic and acidic residues: residues 407 to 464 (EKIS…KPDL) and 484 to 500 (LKVDKGRAARGEKELSS). Tandem repeats lie at residues 415 to 417 (KRD), 420 to 422 (KKE), 424 to 426 (KKE), 427 to 429 (RKE), 431 to 433 (KKE), 436 to 438 (RKE), 440 to 442 (KKD), 444 to 446 (KKD), and 449 to 451 (RKD). A Phosphothreonine modification is found at Thr-504. Residues Ser-526 and Ser-527 each carry the phosphoserine modification. Residues 536–556 (EELKREERGLLAEPRDTELGE) are compositionally biased toward basic and acidic residues. The stretch at 539-541 (KRE) is repeat 11. The span at 567 to 579 (GRPSTAIQVTQPP) shows a compositional bias: polar residues. The span at 587-631 (QVEREKEVVPDFPEDKGSKNRAPDSGAEVEREKETWEERKPREAE) shows a compositional bias: basic and acidic residues. Ser-604 and Ser-611 each carry phosphoserine. Thr-633 bears the Phosphothreonine mark. Residues 640-667 (AREESEPEVKEDVIEKAELEEMEEVHPS) are compositionally biased toward basic and acidic residues. Phosphoserine occurs at positions 644, 667, 678, and 786. Composition is skewed to polar residues over residues 785 to 800 (ASQSAESAVPASSSKT), 846 to 859 (EDQSVASLTAPQTE), and 870 to 882 (TVTSIPSSRTEAT). Ser-873, Ser-876, Ser-877, and Ser-890 each carry phosphoserine. Thr-893 carries the phosphothreonine modification. 3 positions are modified to phosphoserine: Ser-895, Ser-899, and Ser-908. A compositionally biased stretch (polar residues) spans 944-954 (VTTSEKLSSQY). Phosphoserine occurs at positions 981, 991, 999, 1008, 1014, 1023, and 1062. Thr-1068 bears the Phosphothreonine mark. Positions 1096 to 1105 (GEAGAASGAG) are enriched in low complexity. Basic and acidic residues predominate over residues 1112–1124 (RTQEPAEPQKDEL). A phosphoserine mark is found at Ser-1131, Ser-1133, Ser-1147, Ser-1159, Ser-1177, Ser-1187, Ser-1190, Ser-1196, Ser-1205, and Ser-1208. Positions 1179–1189 (EDTQSLSFSEE) are enriched in polar residues. Residues 1197–1210 (LDISSKQLSPESLG) show a composition bias toward polar residues. Over residues 1223–1234 (EKGPLVKAEDNS) the composition is skewed to basic and acidic residues. Residues Ser-1251, Ser-1289, Ser-1310, Ser-1313, and Ser-1316 each carry the phosphoserine modification. The segment covering 1302–1317 (TSDSSLTKSPESLSSP) has biased composition (low complexity). 6 stretches are compositionally biased toward basic and acidic residues: residues 1332–1350 (GSEDRATEQKEKELERKSE), 1370–1384 (SVMHQKDEALDEENK), 1391–1435 (KTSE…KALE), 1449–1488 (PRARAQEHRDLEQKDEHLELRDKTPEEKDKVLVLEDRAPE), 1499–1541 (RAPE…DQDN), and 1549–1599 (GTLK…EKTR). Ser-1516, Ser-1580, and Ser-1606 each carry phosphoserine. Over residues 1609–1625 (EEGKAREQEEKYWKEQD) the composition is skewed to basic and acidic residues. Phosphoserine is present on residues Ser-1634 and Ser-1648. The segment covering 1709-1718 (QEITPLQHTP) has biased composition (polar residues). Residues Ser-1720, Ser-1747, Ser-1762, Ser-1768, and Ser-1772 each carry the phosphoserine modification. Thr-1777 carries the phosphothreonine modification. Phosphoserine is present on residues Ser-1783 and Ser-1789. Over residues 1794–1808 (TKSTPPTRNEPTTPS) the composition is skewed to polar residues. Residues 1823-1844 (LPPAPLSPAPAPPTPAPDPHAP) are compositionally biased toward pro residues. Residues 1878-1890 (KDYRKAEGEREGE) show a composition bias toward basic and acidic residues. Residue Ser-1902 is modified to Phosphoserine. Composition is skewed to basic and acidic residues over residues 1907 to 1935 (EVTESHTTRDAEQTEPEQREPTPYPDERS) and 1972 to 1988 (STKEEAAGRNKSAEKEL). Thr-1928 carries the phosphothreonine modification. Residues 1990 to 2006 (SAVSPPNLHSDTPTFSY) show a composition bias toward polar residues. Position 1993 is a phosphoserine (Ser-1993). The segment covering 2013 to 2039 (TIPPRQEPEPGPNVEPSFTPPAVPPRA) has biased composition (pro residues). Thr-2031 carries the phosphothreonine modification. The span at 2042–2058 (SLSQDPSPPLNGSTTSC) shows a compositional bias: polar residues. A phosphoserine mark is found at Ser-2048 and Ser-2082. Basic and acidic residues predominate over residues 2060-2096 (PDRRTPSPKEAGRSHWDDGTNDSDLEKGAREQPEKET). A compositionally biased stretch (pro residues) spans 2149-2158 (PAPPQLPSPA). Phosphoserine is present on residues Ser-2209, Ser-2226, Ser-2230, Ser-2233, and Ser-2234. The span at 2231–2242 (EGSSSEATTPVI) shows a compositional bias: polar residues. Low complexity predominate over residues 2279-2292 (PLSPAPLASRDLAP). The span at 2355 to 2367 (AEKEEAEALHAWE) shows a compositional bias: basic and acidic residues. Ser-2425 carries the phosphoserine modification. A compositionally biased stretch (low complexity) spans 2478 to 2490 (SASDSGSSQSDSD). Positions 2535–2551 (DPPPAPLPDPRPPPPRP) are enriched in pro residues. Over residues 2566–2576 (GRVERLREKVQ) the composition is skewed to basic and acidic residues. Phosphoserine occurs at positions 2623 and 2637.

This sequence belongs to the MAP1 family. As to quaternary structure, 3 different light chains, LC1 (a cleavage product of MAP1B), LC2 (a cleavage product of MAP1A) and LC3 (produced by one of the MAP1LC3 genes), can associate with the MAP1A or MAP1B heavy chains. Interacts with guanylate kinase-like domain of DLG1, DLG2 and DLG4. Binds to CSNK1D. Interacts with TIAM2. Interacts with ELAVL4. In terms of processing, phosphorylated by CSNK1D. LC2 is generated from MAP1A by proteolytic processing. It is free to associate with both MAP1A and MAP1B. As to expression, both isoforms highly expressed in brain, and to a lesser extent in embryo. Isoform 1 is also expressed at a low level in other tissues including heart and muscle.

The protein resides in the cytoplasm. The protein localises to the cytoskeleton. Its function is as follows. Structural protein involved in the filamentous cross-bridging between microtubules and other skeletal elements. The chain is Microtubule-associated protein 1A (Map1a) from Mus musculus (Mouse).